The primary structure comprises 203 residues: Nudix hydrolase 12, mitochondrial (203 aa).

In terms of domain architecture, Nudix hydrolase spans 18–166; the sequence is NFRLVSGCIP…WMQRALEEFL (149 aa). The Nudix box signature appears at 66–87; it reads GGWEDDETVLEAASREAIEEAG. Positions 81 and 85 each coordinate Mg(2+).

It belongs to the Nudix hydrolase family. Mg(2+) is required as a cofactor. Mn(2+) serves as cofactor. As to expression, expressed in roots, leaves, stems and inflorescences.

It localises to the mitochondrion. In terms of biological role, probably mediates the hydrolysis of some nucleoside diphosphate derivatives. This chain is Nudix hydrolase 12, mitochondrial (NUDT12), found in Arabidopsis thaliana (Mouse-ear cress).